A 306-amino-acid chain; its full sequence is Putative type I specificity subunit S.MpnORF285P (306 aa).

Belongs to the type-I restriction system S methylase family. As to quaternary structure, the methyltransferase is composed of M and S polypeptides.

In terms of biological role, the specificity (S) subunit of a type I methyltransferase (MTase); this subunit dictates DNA sequence specificity. The single R subunit has multiple frameshifts and is probably not expressed. This is Putative type I specificity subunit S.MpnORF285P from Mycoplasma pneumoniae (strain ATCC 29342 / M129 / Subtype 1) (Mycoplasmoides pneumoniae).